The primary structure comprises 140 residues: MSEEQTTQVNIKKKEKWGVAHIYSSYNNTIIHITDLTGAETISRWSGGMVVKADRDEPSPYAAMIAARRAAEEAMEKGITGVHIKVRAPGGSKSKSPGPGAQAAIRALSRAGLRIGRVEDVTPIPHDGTRPKGGRRGRRV.

Residues 116–140 form a disordered region; that stretch reads GRVEDVTPIPHDGTRPKGGRRGRRV.

It belongs to the universal ribosomal protein uS11 family. As to quaternary structure, part of the 30S ribosomal subunit.

Located on the platform of the 30S subunit. The chain is Small ribosomal subunit protein uS11 from Thermococcus kodakarensis (strain ATCC BAA-918 / JCM 12380 / KOD1) (Pyrococcus kodakaraensis (strain KOD1)).